Here is a 240-residue protein sequence, read N- to C-terminus: MGRIFETRKATMFARWNKMAKAFTRISKDIAIAVKGGGPNPDNNPALRRVLQNARHLNMPKDKVEAAIKRASGQDQQAYEVVVYEGYAPHGVAVMVETATDNVVRTVANVRMHFKNNGGNMGNTGSVAFQFRRMGVFRLAPEGIDQDALELDLIDHGLEEMGESTGEKGEKVLVIRCAFESFGQLQAALEQRKLNVLSSESEYVAQTPVQLPEEQAREVLELVDALEQDEDVQHVFHNLA.

This sequence belongs to the TACO1 family.

The protein localises to the cytoplasm. The chain is Probable transcriptional regulatory protein Adeh_2184 from Anaeromyxobacter dehalogenans (strain 2CP-C).